Reading from the N-terminus, the 254-residue chain is uncharacterized protein (254 aa).

Helical transmembrane passes span 41-61 (LFVF…IKII), 64-84 (ILQA…EYFF), 91-111 (IYCG…LYIL), 125-145 (LLIS…FVLA), 146-166 (PAAL…LWSF), 172-192 (FILL…IQLL), 204-224 (MIRA…ILTP), and 232-252 (LIMS…LLVL).

This sequence belongs to the TatC family.

It is found in the plastid. Its subcellular location is the chloroplast membrane. This is an uncharacterized protein from Pyropia yezoensis (Susabi-nori).